Here is a 1189-residue protein sequence, read N- to C-terminus: Pumilio homolog 1 (1189 aa).

Residue S2 is modified to N-acetylserine. Residue S19 is modified to Phosphoserine. Positions 22 to 73 (LKHHPQEPANPNMPVVLTSGTGSQAQPQPAANQALAAGTHSSPVPGSIGVAG) are disordered. Over residues 45-58 (QAQPQPAANQALAA) the composition is skewed to low complexity. Phosphoserine occurs at positions 75, 98, and 106. Position 112 is a phosphothreonine (T112). 5 positions are modified to phosphoserine: S124, S159, S197, S209, and S229. Residues 233 to 272 (SCLRKGGFGPRDADSDENDKGEKKNKGTFDGDKLGDLKEE) form a disordered region. Residues 250-272 (NDKGEKKNKGTFDGDKLGDLKEE) show a composition bias toward basic and acidic residues. S305 carries the post-translational modification Phosphoserine. Residues 491-503 (QQSAPQAQQGQQQ) are compositionally biased toward low complexity. Disordered regions lie at residues 491–525 (QQSA…GQQT) and 614–647 (AGTT…SSFY). The segment covering 512–525 (RPLTPNQNQQGQQT) has biased composition (polar residues). Phosphothreonine is present on T515. Residues 627–647 (QQPQPQPQQQPSNNLASSSFY) are compositionally biased toward low complexity. A phosphoserine mark is found at S710 and S715. A disordered region spans residues 743-773 (GPVGMPLPSQGPGHSQTPPPSLSSHGSSSSL). Low complexity predominate over residues 764–773 (LSSHGSSSSL). R797 bears the Omega-N-methylarginine mark. A phosphoserine mark is found at S807 and S823. Residues 829–1171 (GRSRLLEDFR…HILAKLEKYY (343 aa)) form the PUM-HD domain. 8 Pumilio repeats span residues 849-884 (EIAG…LVFN), 885-920 (EILQ…ALAE), 921-958 (RIRG…EMVR), 959-994 (ELDG…FIID), 995-1030 (AFKG…PILE), 1031-1066 (ELHQ…KIVA), 1067-1102 (EIRG…VLID), and 1106-1145 (TMND…IVMH). An adenine-nucleotide binding in RNA target region spans residues 864–868 (SRFIQ). A uracil-nucleotide binding in RNA target region spans residues 900–904 (NYVIQ). Residues 936–940 (CRVIQ) form an adenine-nucleotide binding in RNA target region. Positions 974–978 (NHVVQ) are non-specific-nucleotide binding in RNA target. The tract at residues 1010–1014 (CRVIQ) is adenine-nucleotide binding in RNA target. The uracil-nucleotide binding in RNA target stretch occupies residues 1046 to 1050 (NYVIQ). 2 guanine-nucleotide binding in RNA target regions span residues 1082 to 1086 (SNVVE) and 1083 to 1086 (NVVE). The segment at 1125-1129 (NYVVQ) is uracil-nucleotide binding in RNA target.

In terms of assembly, recruits the CCR4-POP2-NOT deadenylase leading to translational inhibition and mRNA degradation. Interacts with TRIM71 (via NHL repeats) in an RNA-dependent manner. Post-translationally, phosphorylation at Ser-715 promotes RNA-binding activity. Following growth factor stimulation phosphorylated at Ser-715, promoting binding to the 3'-UTR of CDKN1B/p27 mRNA. Widely expressed. Expressed in brain, heart, kidney, liver, lung, skin, intestine, spleen, testis and thymus. Weakly or not expressed in muscles and stomach. Expressed at various stages of myeloid and lymphoid cell development. Highly expressed in testis. Expressed in all major brain regions (at protein level).

It is found in the cytoplasm. It localises to the P-body. Its subcellular location is the cytoplasmic granule. Its function is as follows. Sequence-specific RNA-binding protein that acts as a post-transcriptional repressor by binding the 3'-UTR of mRNA targets. Binds to an RNA consensus sequence, the Pumilio Response Element (PRE), 5'-UGUANAUA-3', that is related to the Nanos Response Element (NRE). Mediates post-transcriptional repression of transcripts via different mechanisms: acts via direct recruitment of the CCR4-POP2-NOT deadenylase leading to translational inhibition and mRNA degradation. Also mediates deadenylation-independent repression by promoting accessibility of miRNAs. Following growth factor stimulation, phosphorylated and binds to the 3'-UTR of CDKN1B/p27 mRNA, inducing a local conformational change that exposes miRNA-binding sites, promoting association of miR-221 and miR-222, efficient suppression of CDKN1B/p27 expression, and rapid entry to the cell cycle. Acts as a post-transcriptional repressor of E2F3 mRNAs by binding to its 3'-UTR and facilitating miRNA regulation. Represses a program of genes necessary to maintain genomic stability such as key mitotic, DNA repair and DNA replication factors. Its ability to repress those target mRNAs is regulated by the lncRNA NORAD (non-coding RNA activated by DNA damage) which, due to its high abundance and multitude of PUMILIO binding sites, is able to sequester a significant fraction of PUM1 and PUM2 in the cytoplasm. Involved in neuronal functions by regulating ATXN1 mRNA levels: acts by binding to the 3'-UTR of ATXN1 transcripts, leading to their down-regulation independently of the miRNA machinery. In testis, acts as a post-transcriptional regulator of spermatogenesis by binding to the 3'-UTR of mRNAs coding for regulators of p53/TP53. Involved in embryonic stem cell renewal by facilitating the exit from the ground state: acts by targeting mRNAs coding for naive pluripotency transcription factors and accelerates their down-regulation at the onset of differentiation. Binds specifically to miRNA MIR199A precursor, with PUM2, regulates miRNA MIR199A expression at a postranscriptional level. This chain is Pumilio homolog 1, found in Mus musculus (Mouse).